The following is a 760-amino-acid chain: Catecholate siderophore receptor Fiu (760 aa).

Positions 1 to 31 (MENNRNFPARQFHSLTFFAGLCIGITPVAQA) are cleaved as a signal peptide. In terms of domain architecture, TBDR plug spans 67-175 (PVADTTRTMT…PTGSINMISK (109 aa)). A TBDR beta-barrel domain is found at 180–760 (DSGIDASASI…TFLLTANMHF (581 aa)). A TonB C-terminal box motif is present at residues 743–760 (RYHPGEPRTFLLTANMHF).

This sequence belongs to the TonB-dependent receptor family.

Its subcellular location is the cell outer membrane. Involved in the active transport across the outer membrane of iron complexed with catecholate siderophores such as dihydroxybenzoylserine and dihydroxybenzoate. It derives its energy for transport by interacting with the trans-periplasmic membrane protein TonB. Can also transport catechol-substituted cephalosporins. Receptor for microcins M, H47 and E492. This Escherichia coli (strain K12) protein is Catecholate siderophore receptor Fiu (fiu).